A 196-amino-acid chain; its full sequence is MNKFIVFEGIDGSGKTTQAKLLADYLNGIYTCEPTNGEIGQLIRKVLGGKNCEKESLALLFAGDRVEHIKEIEHKLIENMVICDRYVYSSMVYQSIQGIDIDFIASINRFAKIPDVLIYLDVSIEESLKRMGDRDSKEIFENKEILQKVNKKYMNIINERLFEPKNGYILINTDNKTVEEVHKEIIKKLMDKKIIL.

9–16 is a binding site for ATP; sequence GIDGSGKT.

Belongs to the thymidylate kinase family.

It catalyses the reaction dTMP + ATP = dTDP + ADP. The protein is Probable thymidylate kinase of Methanococcus aeolicus (strain ATCC BAA-1280 / DSM 17508 / OCM 812 / Nankai-3).